Here is a 108-residue protein sequence, read N- to C-terminus: Nucleoid-associated protein HEAR1046 (108 aa).

Residues 86–108 form a disordered region; it reads TSQEKMAGATAGMPMPPGFKMPF. Over residues 99–108 the composition is skewed to pro residues; the sequence is PMPPGFKMPF.

This sequence belongs to the YbaB/EbfC family. Homodimer.

The protein localises to the cytoplasm. It is found in the nucleoid. Its function is as follows. Binds to DNA and alters its conformation. May be involved in regulation of gene expression, nucleoid organization and DNA protection. The protein is Nucleoid-associated protein HEAR1046 of Herminiimonas arsenicoxydans.